A 534-amino-acid polypeptide reads, in one-letter code: Peptide chain release factor 3 (534 aa).

Residues 9-278 (ARRRTFAIIS…FFVEHAPPPQ (270 aa)) form the tr-type G domain. GTP contacts are provided by residues 18-25 (SHPDAGKT), 86-90 (DTPGH), and 140-143 (NKLD).

Belongs to the TRAFAC class translation factor GTPase superfamily. Classic translation factor GTPase family. PrfC subfamily.

It is found in the cytoplasm. In terms of biological role, increases the formation of ribosomal termination complexes and stimulates activities of RF-1 and RF-2. It binds guanine nucleotides and has strong preference for UGA stop codons. It may interact directly with the ribosome. The stimulation of RF-1 and RF-2 is significantly reduced by GTP and GDP, but not by GMP. The sequence is that of Peptide chain release factor 3 from Xanthomonas campestris pv. campestris (strain 8004).